A 344-amino-acid polypeptide reads, in one-letter code: Probable dual-specificity RNA methyltransferase RlmN (344 aa).

Glu-83 acts as the Proton acceptor in catalysis. The Radical SAM core domain maps to 89–323; the sequence is YLDRKTICVS…VSVRRSRGKD (235 aa). A disulfide bond links Cys-96 and Cys-328. The [4Fe-4S] cluster site is built by Cys-103, Cys-107, and Cys-110. S-adenosyl-L-methionine is bound by residues 153 to 154, Ser-185, 209 to 211, and Asn-285; these read GE and SLH. Cys-328 acts as the S-methylcysteine intermediate in catalysis.

This sequence belongs to the radical SAM superfamily. RlmN family. Requires [4Fe-4S] cluster as cofactor.

It is found in the cytoplasm. It catalyses the reaction adenosine(2503) in 23S rRNA + 2 reduced [2Fe-2S]-[ferredoxin] + 2 S-adenosyl-L-methionine = 2-methyladenosine(2503) in 23S rRNA + 5'-deoxyadenosine + L-methionine + 2 oxidized [2Fe-2S]-[ferredoxin] + S-adenosyl-L-homocysteine. The catalysed reaction is adenosine(37) in tRNA + 2 reduced [2Fe-2S]-[ferredoxin] + 2 S-adenosyl-L-methionine = 2-methyladenosine(37) in tRNA + 5'-deoxyadenosine + L-methionine + 2 oxidized [2Fe-2S]-[ferredoxin] + S-adenosyl-L-homocysteine. Its function is as follows. Specifically methylates position 2 of adenine 2503 in 23S rRNA and position 2 of adenine 37 in tRNAs. The chain is Probable dual-specificity RNA methyltransferase RlmN from Deinococcus geothermalis (strain DSM 11300 / CIP 105573 / AG-3a).